The following is a 39-amino-acid chain: Contryphan-Cal4 (39 aa).

Positions 1–20 are cleaved as a signal peptide; the sequence is MTRTAVLLLTLLFLVAMAAS. Cys29 and Cys35 are oxidised to a cystine.

In terms of tissue distribution, expressed by the venom duct.

Its subcellular location is the secreted. Probable neurotoxin. The polypeptide is Contryphan-Cal4 (Californiconus californicus (California cone)).